A 323-amino-acid chain; its full sequence is Acetyl esterase (323 aa).

Positions 91–93 (HGG) match the Involved in the stabilization of the negatively charged intermediate by the formation of the oxyanion hole motif. Active-site residues include serine 165, aspartate 262, and histidine 292.

Belongs to the 'GDXG' lipolytic enzyme family. In terms of assembly, homodimer. Interacts with MalT and MelA.

It localises to the cytoplasm. Displays esterase activity towards short chain fatty esters (acyl chain length of up to 8 carbons). Able to hydrolyze triacetylglycerol (triacetin) and tributyrylglycerol (tributyrin), but not trioleylglycerol (triolein) or cholesterol oleate. Negatively regulates MalT activity by antagonizing maltotriose binding. Inhibits MelA galactosidase activity. This chain is Acetyl esterase, found in Salmonella agona (strain SL483).